Here is a 145-residue protein sequence, read N- to C-terminus: Nicking endonuclease (145 aa).

The interval 126-145 (NPQEKTQVKTETKSGFARFL) is disordered.

Functionally, endonuclease responsible for the single-chain interruptions (nicks) located at specific positions in the minus strand of the viral genome. This Escherichia phage T5 (Enterobacteria phage T5) protein is Nicking endonuclease.